Consider the following 355-residue polypeptide: Probable nitronate monooxygenase (355 aa).

FMN is bound by residues N71, Q175, G180, G219, and 238–241 (QMGT).

This sequence belongs to the nitronate monooxygenase family. NMO class I subfamily. FMN is required as a cofactor.

It carries out the reaction 3 propionate 3-nitronate + 3 O2 + H2O = 3 3-oxopropanoate + 2 nitrate + nitrite + H2O2 + 3 H(+). Functionally, nitronate monooxygenase that uses molecular oxygen to catalyze the oxidative denitrification of alkyl nitronates. Acts on propionate 3-nitronate (P3N), the presumed physiological substrate. Probably functions in the detoxification of P3N, a metabolic poison produced by plants and fungi as a defense mechanism. This chain is Probable nitronate monooxygenase, found in Staphylococcus saprophyticus subsp. saprophyticus (strain ATCC 15305 / DSM 20229 / NCIMB 8711 / NCTC 7292 / S-41).